Here is a 454-residue protein sequence, read N- to C-terminus: CCA-adding enzyme (454 aa).

Residues Ser53 and Lys56 each coordinate ATP. 2 residues coordinate CTP: Ser53 and Lys56. 3 residues coordinate Mg(2+): Asp65, Asp67, and Asp119. Positions 142, 161, and 170 each coordinate ATP. Residues His142, Lys161, and Tyr170 each contribute to the CTP site.

This sequence belongs to the tRNA nucleotidyltransferase/poly(A) polymerase family. Archaeal CCA-adding enzyme subfamily. As to quaternary structure, homodimer. Mg(2+) is required as a cofactor.

It catalyses the reaction a tRNA precursor + 2 CTP + ATP = a tRNA with a 3' CCA end + 3 diphosphate. It carries out the reaction a tRNA with a 3' CCA end + 2 CTP + ATP = a tRNA with a 3' CCACCA end + 3 diphosphate. Catalyzes the addition and repair of the essential 3'-terminal CCA sequence in tRNAs without using a nucleic acid template. Adds these three nucleotides in the order of C, C, and A to the tRNA nucleotide-73, using CTP and ATP as substrates and producing inorganic pyrophosphate. tRNA 3'-terminal CCA addition is required both for tRNA processing and repair. Also involved in tRNA surveillance by mediating tandem CCA addition to generate a CCACCA at the 3' terminus of unstable tRNAs. While stable tRNAs receive only 3'-terminal CCA, unstable tRNAs are marked with CCACCA and rapidly degraded. The protein is CCA-adding enzyme of Thermococcus gammatolerans (strain DSM 15229 / JCM 11827 / EJ3).